Here is a 168-residue protein sequence, read N- to C-terminus: Endoribonuclease YbeY (168 aa).

The Zn(2+) site is built by histidine 125, histidine 129, and histidine 135.

The protein belongs to the endoribonuclease YbeY family. Zn(2+) is required as a cofactor.

The protein resides in the cytoplasm. Its function is as follows. Single strand-specific metallo-endoribonuclease involved in late-stage 70S ribosome quality control and in maturation of the 3' terminus of the 16S rRNA. The polypeptide is Endoribonuclease YbeY (Rhodopseudomonas palustris (strain BisB18)).